Reading from the N-terminus, the 149-residue chain is Large ribosomal subunit protein uL13 (149 aa).

It belongs to the universal ribosomal protein uL13 family. Part of the 50S ribosomal subunit.

In terms of biological role, this protein is one of the early assembly proteins of the 50S ribosomal subunit, although it is not seen to bind rRNA by itself. It is important during the early stages of 50S assembly. The protein is Large ribosomal subunit protein uL13 of Chlorobium luteolum (strain DSM 273 / BCRC 81028 / 2530) (Pelodictyon luteolum).